We begin with the raw amino-acid sequence, 698 residues long: Serine/threonine-protein kinase Nek8 (698 aa).

The region spanning 4-258 is the Protein kinase domain; the sequence is YERIRVVGRG…LSHIMAQPLC (255 aa). ATP-binding positions include 10-18 and Lys33; that span reads VGRGAFGIV. The Proton acceptor role is filled by Asp128. The residue at position 162 (Thr162) is a Phosphothreonine; by autocatalysis. The disordered stretch occupies residues 281–307; the sequence is LTPGTPMAPGSTGSRATSARCRGVPRG. RCC1 repeat units follow at residues 415-466, 467-518, 520-571, 585-636, and 638-689; these read RGII…ALSA, DGEL…ILTS, GRVL…TLLC, SGAC…AIGA, and GEVY…LAVR.

Belongs to the protein kinase superfamily. NEK Ser/Thr protein kinase family. NIMA subfamily. In terms of assembly, interacts with PKD2; may regulate PKD2 targeting to the cilium. Interacts with ANKS6. Component of a complex containing at least ANKS6, INVS, NEK8 and NPHP3. ANKS6 may organize complex assembly by linking INVS and NPHP3 to NEK8 and INVS may target it to the proximal ciliary axoneme. Interacts with ANKS3. Mg(2+) is required as a cofactor.

Its subcellular location is the cytoplasm. It is found in the cytoskeleton. The protein resides in the cell projection. It localises to the cilium. The protein localises to the cilium axoneme. Its subcellular location is the microtubule organizing center. It is found in the centrosome. It catalyses the reaction L-seryl-[protein] + ATP = O-phospho-L-seryl-[protein] + ADP + H(+). The catalysed reaction is L-threonyl-[protein] + ATP = O-phospho-L-threonyl-[protein] + ADP + H(+). Required for renal tubular integrity. May regulate local cytoskeletal structure in kidney tubule epithelial cells. May regulate ciliary biogenesis through targeting of proteins to the cilia. Plays a role in organogenesis and is involved in the regulation of the Hippo signaling pathway. In Rattus norvegicus (Rat), this protein is Serine/threonine-protein kinase Nek8 (Nek8).